A 122-amino-acid polypeptide reads, in one-letter code: Large ribosomal subunit protein uL14c (122 aa).

The protein belongs to the universal ribosomal protein uL14 family. In terms of assembly, part of the 50S ribosomal subunit.

The protein resides in the plastid. It localises to the chloroplast. In terms of biological role, binds to 23S rRNA. This is Large ribosomal subunit protein uL14c from Arabis hirsuta (Hairy rock-cress).